The primary structure comprises 340 residues: DnaJ homolog subfamily B member 1 (340 aa).

The region spanning 2 to 70 is the J domain; the sequence is GKDYYQTLGL…REIFDRYGEE (69 aa). Residue Thr307 is modified to Phosphothreonine.

Interacts with DNAJC3. Interacts with HSF1 (via transactivation domain); this interaction results in the inhibition of heat shock- and HSF1-induced transcriptional activity during the attenuation and recovery phase period of the heat shock response. Interacts with BAG3.

The protein localises to the cytoplasm. The protein resides in the nucleus. Its subcellular location is the nucleolus. Its function is as follows. Interacts with HSP70 and can stimulate its ATPase activity. Stimulates the association between HSC70 and HIP. Negatively regulates heat shock-induced HSF1 transcriptional activity during the attenuation and recovery phase period of the heat shock response. Stimulates ATP hydrolysis and the folding of unfolded proteins mediated by HSPA1A/B (in vitro). In Mus musculus (Mouse), this protein is DnaJ homolog subfamily B member 1 (Dnajb1).